The sequence spans 763 residues: Amine oxidase [copper-containing] 3 (763 aa).

At 1–5 (MNQKT) the chain is on the cytoplasmic side. The helical; Signal-anchor for type II membrane protein transmembrane segment at 6 to 26 (ILVLLILAVITIFALVCVLLV) threads the bilayer. At 27–763 (GRGGDGGEPS…AFSHGGFSHN (737 aa)) the chain is on the extracellular side. Ser-43 carries an O-linked (GalNAc...) serine glycan. A glycan (N-linked (GlcNAc...) asparagine) is linked at Asn-137. Cysteines 198 and 199 form a disulfide. O-linked (GalNAc...) threonine glycosylation is present at Thr-212. Residues Asn-232 and Asn-294 are each glycosylated (N-linked (GlcNAc...) asparagine). Asp-386 serves as the catalytic Proton acceptor. Cys-404 and Cys-430 are disulfide-bonded. The active-site Schiff-base intermediate with substrate; via topaquinone is the Tyr-471. Tyr-471 is modified (2',4',5'-topaquinone). 2 residues coordinate Cu(2+): His-520 and His-522. Residues Asp-529, Leu-530, Asp-531, and Glu-572 each coordinate Ca(2+). An N-linked (GlcNAc...) (complex) asparagine glycan is attached at Asn-592. Asn-618 carries N-linked (GlcNAc...) asparagine glycosylation. Glu-641, Phe-663, and Asn-665 together coordinate Ca(2+). An N-linked (GlcNAc...) asparagine glycan is attached at Asn-666. Positions 667, 673, and 674 each coordinate Ca(2+). Thr-679 is a glycosylation site (O-linked (GlcNAc) threonine). Residue His-684 coordinates Cu(2+). A disulfide bridge connects residues Cys-734 and Cys-741.

The protein belongs to the copper/topaquinone oxidase family. In terms of assembly, homodimer; disulfide-linked. Can heterodimerize with isoform 2 leading to reduced surface expression. Probably forms heterodimers with AOC2. The cofactor is Cu(2+). Ca(2+) serves as cofactor. It depends on L-topaquinone as a cofactor. Topaquinone (TPQ) is generated by copper-dependent autoxidation of a specific tyrosyl residue. In terms of processing, N- and O-glycosylated. Strongly expressed on the high endothelial venules of peripheral lymph nodes and on hepatic endothelia. Also highly expressed in appendix, lung and small intestine. Expressed also in adipose tissue, in bone marrow, colon, heart, kidney, ovary, pancreas, placenta, prostate, skeletal muscle, spleen and testis. Isoform 2 seems to be the predominant transcript in fetal kidneys, fetal cartilage and fetal tonsils. The highest relative expression of isoform 2 occurs in skeletal muscle, heart, pancreas, kidney, and lung.

The protein localises to the cell membrane. The catalysed reaction is methylamine + O2 + H2O = formaldehyde + H2O2 + NH4(+). It carries out the reaction benzylamine + O2 + H2O = benzaldehyde + H2O2 + NH4(+). The enzyme catalyses 2-phenylethylamine + O2 + H2O = 2-phenylacetaldehyde + H2O2 + NH4(+). Functionally, catalyzes the oxidative deamination of primary amines to the corresponding aldehydes with the concomitant production of hydrogen peroxide and ammonia. Has a preference for the primary monoamines methylamine and benzylamine. Could also act on 2-phenylethylamine but much less efficiently. At endothelial cells surface can also function as a cell adhesion protein that participates in lymphocyte extravasation and recirculation by mediating the binding of lymphocytes to peripheral lymph node vascular endothelial cells in an L-selectin-independent fashion. Its function is as follows. Has no semicarbazide-sensitive amine oxidase (SSAO) activity. This Homo sapiens (Human) protein is Amine oxidase [copper-containing] 3.